Here is a 723-residue protein sequence, read N- to C-terminus: BBSome complex assembly protein BBS10 (723 aa).

Belongs to the TCP-1 chaperonin family. As to quaternary structure, component of a complex composed at least of MKKS, BBS10, BBS12, TCP1, CCT2, CCT3, CCT4, CCT5 and CCT8.

Its subcellular location is the cell projection. The protein localises to the cilium. Functionally, probable molecular chaperone that assists the folding of proteins upon ATP hydrolysis. Plays a role in the assembly of BBSome, a complex involved in ciliogenesis regulating transports vesicles to the cilia. Involved in adipogenic differentiation. The protein is BBSome complex assembly protein BBS10 (BBS10) of Homo sapiens (Human).